We begin with the raw amino-acid sequence, 483 residues long: Protein nucleotidyltransferase YdiU (483 aa).

Positions 81, 83, 84, 103, 115, 116, 166, and 173 each coordinate ATP. The Proton acceptor role is filled by Asp-244. Positions 245 and 254 each coordinate Mg(2+). Asp-254 is an ATP binding site.

It belongs to the SELO family. Mg(2+) serves as cofactor. The cofactor is Mn(2+).

The catalysed reaction is L-seryl-[protein] + ATP = 3-O-(5'-adenylyl)-L-seryl-[protein] + diphosphate. The enzyme catalyses L-threonyl-[protein] + ATP = 3-O-(5'-adenylyl)-L-threonyl-[protein] + diphosphate. It catalyses the reaction L-tyrosyl-[protein] + ATP = O-(5'-adenylyl)-L-tyrosyl-[protein] + diphosphate. It carries out the reaction L-histidyl-[protein] + UTP = N(tele)-(5'-uridylyl)-L-histidyl-[protein] + diphosphate. The catalysed reaction is L-seryl-[protein] + UTP = O-(5'-uridylyl)-L-seryl-[protein] + diphosphate. The enzyme catalyses L-tyrosyl-[protein] + UTP = O-(5'-uridylyl)-L-tyrosyl-[protein] + diphosphate. Its function is as follows. Nucleotidyltransferase involved in the post-translational modification of proteins. It can catalyze the addition of adenosine monophosphate (AMP) or uridine monophosphate (UMP) to a protein, resulting in modifications known as AMPylation and UMPylation. In Shewanella halifaxensis (strain HAW-EB4), this protein is Protein nucleotidyltransferase YdiU.